Here is a 424-residue protein sequence, read N- to C-terminus: STAM-binding protein (424 aa).

Positions 1–127 (MSDHGDVSLP…YEQYKERKKK (127 aa)) are interaction with CHMP3. Phosphoserine occurs at positions 2 and 48. The interval 227–231 (PAKPP) is interaction with STAM. A Phosphoserine modification is found at S243. One can recognise an MPN domain in the interval 257 to 388 (IVVPRNLCSE…LTDYGLQEIS (132 aa)). Residues H335, H337, D348, H350, C390, H396, and H398 each coordinate Zn(2+). Positions 335 to 348 (HTHPTQTAFLSSVD) match the JAMM motif motif.

It belongs to the peptidase M67C family. As to quaternary structure, interacts with STAM. Interacts with SMAD6 and SMAD7. Interacts with CHMP3; the interaction appears to relieve the autoinhibition of CHMP3. Interacts with SMURF2 and RNF11; this interaction promotes ubiquitination. Zn(2+) serves as cofactor. In terms of processing, phosphorylated after BMP type I receptor activation. Ubiquitinated by SMURF2 in the presence of RNF11. As to expression, expressed in brain.

It localises to the nucleus. Its subcellular location is the membrane. The protein resides in the cytoplasm. It is found in the early endosome. With respect to regulation, inhibited by N-ethylmaleimide. In terms of biological role, zinc metalloprotease that specifically cleaves 'Lys-63'-linked polyubiquitin chains. Does not cleave 'Lys-48'-linked polyubiquitin chains. Plays a role in signal transduction for cell growth and MYC induction mediated by IL-2 and GM-CSF. Potentiates BMP (bone morphogenetic protein) signaling by antagonizing the inhibitory action of SMAD6 and SMAD7. Has a key role in regulation of cell surface receptor-mediated endocytosis and ubiquitin-dependent sorting of receptors to lysosomes. Endosomal localization of STAMBP is required for efficient EGFR degradation but not for its internalization. Involved in the negative regulation of PI3K-AKT-mTOR and RAS-MAP signaling pathways. The chain is STAM-binding protein (Stambp) from Mus musculus (Mouse).